The chain runs to 417 residues: Imidazolonepropionase (417 aa).

Positions 80 and 82 each coordinate Fe(3+). 2 residues coordinate Zn(2+): His-80 and His-82. Residues Arg-89, Tyr-152, and His-187 each coordinate 4-imidazolone-5-propanoate. Tyr-152 serves as a coordination point for N-formimidoyl-L-glutamate. Position 252 (His-252) interacts with Fe(3+). Residue His-252 coordinates Zn(2+). Glu-255 serves as a coordination point for 4-imidazolone-5-propanoate. Asp-326 provides a ligand contact to Fe(3+). A Zn(2+)-binding site is contributed by Asp-326. 2 residues coordinate N-formimidoyl-L-glutamate: Asn-328 and Gly-330. A 4-imidazolone-5-propanoate-binding site is contributed by Ser-331.

The protein belongs to the metallo-dependent hydrolases superfamily. HutI family. Zn(2+) is required as a cofactor. It depends on Fe(3+) as a cofactor.

Its subcellular location is the cytoplasm. The catalysed reaction is 4-imidazolone-5-propanoate + H2O = N-formimidoyl-L-glutamate. It functions in the pathway amino-acid degradation; L-histidine degradation into L-glutamate; N-formimidoyl-L-glutamate from L-histidine: step 3/3. Its function is as follows. Catalyzes the hydrolytic cleavage of the carbon-nitrogen bond in imidazolone-5-propanoate to yield N-formimidoyl-L-glutamate. It is the third step in the universal histidine degradation pathway. The sequence is that of Imidazolonepropionase from Bacteroides fragilis (strain YCH46).